The chain runs to 120 residues: Seripauperin-4 (120 aa).

The helical transmembrane segment at 7–24 (IAAGVAAIAATASATTTI) threads the bilayer.

It belongs to the SRP1/TIP1 family. Seripauperin subfamily.

The protein resides in the membrane. This is Seripauperin-4 (PAU4) from Saccharomyces cerevisiae (strain ATCC 204508 / S288c) (Baker's yeast).